A 342-amino-acid polypeptide reads, in one-letter code: Glucokinase (342 aa).

Residue Gly7–Thr12 coordinates ATP.

Belongs to the bacterial glucokinase family.

It is found in the cytoplasm. It catalyses the reaction D-glucose + ATP = D-glucose 6-phosphate + ADP + H(+). This chain is Glucokinase, found in Nostoc sp. (strain PCC 7120 / SAG 25.82 / UTEX 2576).